The following is a 589-amino-acid chain: Aspartate--tRNA ligase (589 aa).

Glutamate 172 is an L-aspartate binding site. Positions 196 to 199 (QLFK) are aspartate. Arginine 218 is a binding site for L-aspartate. ATP contacts are provided by residues 218 to 220 (RDE) and glutamine 227. Histidine 449 contributes to the L-aspartate binding site. Glutamate 483 lines the ATP pocket. Arginine 490 lines the L-aspartate pocket. 535-538 (GLDR) is an ATP binding site.

The protein belongs to the class-II aminoacyl-tRNA synthetase family. Type 1 subfamily. Homodimer.

It localises to the cytoplasm. The enzyme catalyses tRNA(Asp) + L-aspartate + ATP = L-aspartyl-tRNA(Asp) + AMP + diphosphate. In terms of biological role, catalyzes the attachment of L-aspartate to tRNA(Asp) in a two-step reaction: L-aspartate is first activated by ATP to form Asp-AMP and then transferred to the acceptor end of tRNA(Asp). The chain is Aspartate--tRNA ligase from Actinobacillus succinogenes (strain ATCC 55618 / DSM 22257 / CCUG 43843 / 130Z).